The following is a 349-amino-acid chain: GDP-mannose:glycolipid 4-beta-D-mannosyltransferase (349 aa).

The N-terminal stretch at 1-14 is a signal peptide; sequence MSASASLPVTRAAA.

Belongs to the glycosyltransferase 94 family.

It localises to the cell inner membrane. The catalysed reaction is beta-D-GlcA-(1-&gt;2)-alpha-D-Man-(1-&gt;3)-beta-D-Glc-(1-&gt;4)-alpha-D-Glc-di-trans,octa-cis-undecaprenyl diphosphate + GDP-alpha-D-mannose = beta-D-Man-(1-&gt;4)-beta-D-GlcA-(1-&gt;2)-alpha-D-Man-(1-&gt;3)-beta-D-Glc-(1-&gt;4)-alpha-D-Glc-di-trans,octa-cis-undecaprenyl diphosphate + GDP + H(+). It participates in glycan biosynthesis; xanthan biosynthesis. Functionally, nonprocessive beta-mannosyltransferase that catalyzes the transfer of a mannose residue from GDP-mannose to glucuronic acid-beta-1,2-mannose-alpha-1,3-glucose-beta-1,4-glucose-PP-polyisoprenyl to form the lipid-linked pentasaccharide repeating unit of xanthan, Man-GlcA-Man-Glc(2)-PP-Pol. Is involved in the biosynthesis of the exopolysaccharide xanthan. To a lesser extent, can also use ADP-Man and even GDP-Glc as sugar donor substrates in vitro. Is unable to transfer a Man residue to the free-tetrasaccharide GlcA-Man-Glc(2) used as an acceptor, which indicates that the diphosphate group and the lipid moiety in the acceptor substrate are of major importance for acceptor binding and catalysis. This is GDP-mannose:glycolipid 4-beta-D-mannosyltransferase (gumI) from Xanthomonas campestris pv. campestris.